The chain runs to 945 residues: Leucine--tRNA ligase (945 aa).

The short motif at 43–53 is the 'HIGH' region element; it reads PYPNGAVHIGH. Residues 638–642 carry the 'KMSKS' region motif; sequence KMSKS. Position 641 (K641) interacts with ATP.

Belongs to the class-I aminoacyl-tRNA synthetase family.

The protein resides in the cytoplasm. It carries out the reaction tRNA(Leu) + L-leucine + ATP = L-leucyl-tRNA(Leu) + AMP + diphosphate. The chain is Leucine--tRNA ligase from Pyrobaculum islandicum (strain DSM 4184 / JCM 9189 / GEO3).